Reading from the N-terminus, the 179-residue chain is Large ribosomal subunit protein uL5 (179 aa).

It belongs to the universal ribosomal protein uL5 family. As to quaternary structure, part of the 50S ribosomal subunit; part of the 5S rRNA/L5/L18/L25 subcomplex. Contacts the 5S rRNA and the P site tRNA. Forms a bridge to the 30S subunit in the 70S ribosome.

This is one of the proteins that bind and probably mediate the attachment of the 5S RNA into the large ribosomal subunit, where it forms part of the central protuberance. In the 70S ribosome it contacts protein S13 of the 30S subunit (bridge B1b), connecting the 2 subunits; this bridge is implicated in subunit movement. Contacts the P site tRNA; the 5S rRNA and some of its associated proteins might help stabilize positioning of ribosome-bound tRNAs. This chain is Large ribosomal subunit protein uL5, found in Solidesulfovibrio magneticus (strain ATCC 700980 / DSM 13731 / RS-1) (Desulfovibrio magneticus).